The following is a 2327-amino-acid chain: Kielin/chordin-like protein (2327 aa).

Positions 1–19 (MNTLLWTILLPLLFSFCVC) are cleaved as a signal peptide. The segment at 250-294 (LPLPYSLSGERQMEDEEIQREPRAPDLSDTDHYQQQQSEVPAQLL) is disordered. Residues 268 to 281 (QREPRAPDLSDTDH) are compositionally biased toward basic and acidic residues. Residues 291–332 (AQLLAKDDRLQRLEEAVKGLTNMIDMIKSQNADLQARVIALE) are a coiled coil. 28 consecutive VWFC domains span residues 339–400 (STCV…SVGP), 401–438 (CMSC…PLCA), 439–493 (TGCS…AKCQ), 494–553 (QGCE…PSCP), 554–610 (VCEL…LDCS), 611–669 (ACEM…SQCQ), 670–728 (SCMD…PMCD), 729–786 (GCLY…PRCE), 787–847 (GCEY…PSCD), 848–907 (VCDF…PVCK), 908–966 (VCVQ…PVCD), 967–1025 (SCSY…AKCP), 1026–1083 (DCRY…NNCN), 1084–1142 (GCNY…PQCP), 1146–1203 (ADCP…RSCD), 1204–1260 (GCLM…KECQ), 1261–1319 (DCQY…PVCD), 1321–1377 (CSYN…CPIC), 1378–1439 (QGCH…DGCN), 1440–1495 (YSGR…PRCT), 1496–1555 (GICK…PVCD), 1556–1614 (RCFY…RECP), 1615–1673 (VCRY…PRCR), 1674–1731 (GCVY…PVCA), 1732–1799 (DCIS…SSCA), 1800–1860 (QALS…PVCN), 1861–1924 (ECVV…HECQ), and 1928–1988 (VSCW…PHCI). The VWFD domain occupies 1992-2168 (ATCIAFGDPH…SSNDSSSSCW (177 aa)). Disulfide bonds link Cys1994-Cys2126 and Cys2016-Cys2167. The region spanning 2259-2319 (CPHDRGYVFD…ESHCIPPESC (61 aa)) is the TIL domain.

The protein localises to the secreted. In terms of biological role, may be a signaling molecule that mediates inductive activities of the embryonic midline. Able to dorsalize mesoderm. This is Kielin/chordin-like protein (kcp) from Xenopus laevis (African clawed frog).